A 564-amino-acid polypeptide reads, in one-letter code: Tripeptidyl-peptidase 1 (564 aa).

Residues 1–19 (MGLQACLLGLFALILSGKC) form the signal peptide. A propeptide spans 20-195 (SYSPEPDQRR…PEPQVTGTVG (176 aa)) (removed in mature form). Cys-111 and Cys-122 are disulfide-bonded. A Peptidase S53 domain is found at 199–564 (GVTPSVIRKR…PALPKTLLNP (366 aa)). 2 N-linked (GlcNAc...) asparagine glycosylation sites follow: Asn-210 and Asn-222. Residues Glu-272 and Asp-276 each act as charge relay system in the active site. Asn-286, Asn-313, and Asn-443 each carry an N-linked (GlcNAc...) asparagine glycan. Disulfide bonds link Cys-365–Cys-527 and Cys-523–Cys-538. Residue Ser-475 is the Charge relay system of the active site. Residues Asp-518 and Val-519 each coordinate Ca(2+). Residues Gly-540, Gly-542, and Asp-544 each coordinate Ca(2+).

In terms of assembly, monomer. Interacts with CLN5. Interacts with CLN3. It depends on Ca(2+) as a cofactor. Activated by autocatalytic proteolytical processing upon acidification. N-glycosylation is required for processing and activity.

The protein resides in the lysosome. The protein localises to the melanosome. It catalyses the reaction Release of an N-terminal tripeptide from a polypeptide, but also has endopeptidase activity.. Functionally, lysosomal serine protease with tripeptidyl-peptidase I activity. May act as a non-specific lysosomal peptidase which generates tripeptides from the breakdown products produced by lysosomal proteinases. Requires substrates with an unsubstituted N-terminus. The sequence is that of Tripeptidyl-peptidase 1 (TPP1) from Pongo abelii (Sumatran orangutan).